Consider the following 206-residue polypeptide: MSVDPMAYEAQFFGFTPQTCLLRIYVAFQDHLFEVMQAVEQVILKKLEDIPNCEITPVQTRKCTEKFLCFMKGRFDNLFGKMEQLILQSILCIPPNILLPEDKCQETNPFSEEKLELLQQEIKELQEKYKVELCTEQALLAELEEQKTVKAKLRETLTFFDELENIGRYQGTSNFRESLASLVQSCRKLQSIRDNVEKESRRLETQ.

Residues D102–Q206 adopt a coiled-coil conformation.

The protein belongs to the mis12 family. In terms of assembly, component of the MIS12 complex composed of MIS12, DSN1, NSL1 and PMF1. Also interacts with KNL1, CBX3, CBX5, NDC80 and ZWINT.

It is found in the chromosome. It localises to the centromere. Its subcellular location is the kinetochore. Its function is as follows. Part of the MIS12 complex which is required for normal chromosome alignment and segregation and for kinetochore formation during mitosis. Essential for proper kinetochore microtubule attachments. This Mus musculus (Mouse) protein is Protein MIS12 homolog.